An 81-amino-acid polypeptide reads, in one-letter code: Neuronatin (81 aa).

This sequence belongs to the neuronatin family.

Functionally, may participate in the maintenance of segment identity in the hindbrain and pituitary development, and maturation or maintenance of the overall structure of the nervous system. May function as a regulatory subunit of ion channels. The protein is Neuronatin (NNAT) of Homo sapiens (Human).